The following is a 254-amino-acid chain: Uridylate kinase (254 aa).

Lysine 9–glycine 12 provides a ligand contact to ATP. A UMP-binding site is contributed by glycine 51. The ATP site is built by glycine 52 and arginine 56. UMP contacts are provided by residues aspartate 72 and serine 133 to threonine 140. Residues threonine 160, tyrosine 166, and aspartate 169 each contribute to the ATP site.

This sequence belongs to the UMP kinase family. In terms of assembly, homohexamer.

It is found in the cytoplasm. It catalyses the reaction UMP + ATP = UDP + ADP. Its pathway is pyrimidine metabolism; CTP biosynthesis via de novo pathway; UDP from UMP (UMPK route): step 1/1. Inhibited by UTP. Catalyzes the reversible phosphorylation of UMP to UDP. The polypeptide is Uridylate kinase (Synechococcus sp. (strain JA-3-3Ab) (Cyanobacteria bacterium Yellowstone A-Prime)).